The primary structure comprises 203 residues: Guanylate kinase (203 aa).

One can recognise a Guanylate kinase-like domain in the interval 3–181 (GTLYIVAAPS…AVSEMCAIFT (179 aa)). 10-17 (APSGAGKS) contributes to the ATP binding site.

It belongs to the guanylate kinase family.

It localises to the cytoplasm. It carries out the reaction GMP + ATP = GDP + ADP. Functionally, essential for recycling GMP and indirectly, cGMP. In Xanthomonas campestris pv. campestris (strain 8004), this protein is Guanylate kinase.